Reading from the N-terminus, the 503-residue chain is Probable DNA ligase (503 aa).

Glu-210 is a binding site for ATP. Catalysis depends on Lys-212, which acts as the N6-AMP-lysine intermediate. Positions 217, 232, 261, 296, 367, and 373 each coordinate ATP.

It belongs to the ATP-dependent DNA ligase family. Mg(2+) serves as cofactor.

It carries out the reaction ATP + (deoxyribonucleotide)n-3'-hydroxyl + 5'-phospho-(deoxyribonucleotide)m = (deoxyribonucleotide)n+m + AMP + diphosphate.. In terms of biological role, DNA ligase that seals nicks in double-stranded DNA during DNA replication, DNA recombination and DNA repair. This is Probable DNA ligase from Rhodococcus opacus (strain B4).